The sequence spans 176 residues: 3-hydroxydecanoyl-[acyl-carrier-protein] dehydratase (176 aa).

His-71 is a catalytic residue.

This sequence belongs to the thioester dehydratase family. FabA subfamily. Homodimer.

The protein localises to the cytoplasm. It carries out the reaction a (3R)-hydroxyacyl-[ACP] = a (2E)-enoyl-[ACP] + H2O. The catalysed reaction is (3R)-hydroxydecanoyl-[ACP] = (2E)-decenoyl-[ACP] + H2O. It catalyses the reaction (2E)-decenoyl-[ACP] = (3Z)-decenoyl-[ACP]. It functions in the pathway lipid metabolism; fatty acid biosynthesis. In terms of biological role, necessary for the introduction of cis unsaturation into fatty acids. Catalyzes the dehydration of (3R)-3-hydroxydecanoyl-ACP to E-(2)-decenoyl-ACP and then its isomerization to Z-(3)-decenoyl-ACP. Can catalyze the dehydratase reaction for beta-hydroxyacyl-ACPs with saturated chain lengths up to 16:0, being most active on intermediate chain length. This is 3-hydroxydecanoyl-[acyl-carrier-protein] dehydratase from Afipia carboxidovorans (strain ATCC 49405 / DSM 1227 / KCTC 32145 / OM5) (Oligotropha carboxidovorans).